We begin with the raw amino-acid sequence, 69 residues long: DNA-directed RNA polymerase subunit omega (69 aa).

Belongs to the RNA polymerase subunit omega family. The RNAP catalytic core consists of 2 alpha, 1 beta, 1 beta' and 1 omega subunit. When a sigma factor is associated with the core the holoenzyme is formed, which can initiate transcription.

It carries out the reaction RNA(n) + a ribonucleoside 5'-triphosphate = RNA(n+1) + diphosphate. Its function is as follows. Promotes RNA polymerase assembly. Latches the N- and C-terminal regions of the beta' subunit thereby facilitating its interaction with the beta and alpha subunits. This chain is DNA-directed RNA polymerase subunit omega, found in Hahella chejuensis (strain KCTC 2396).